A 155-amino-acid polypeptide reads, in one-letter code: 6,7-dimethyl-8-ribityllumazine synthase (155 aa).

5-amino-6-(D-ribitylamino)uracil is bound by residues Phe24, 58 to 60 (AFE), and 82 to 84 (AVI). Residue 87–88 (ST) participates in (2S)-2-hydroxy-3-oxobutyl phosphate binding. His90 acts as the Proton donor in catalysis. Phe115 provides a ligand contact to 5-amino-6-(D-ribitylamino)uracil. A (2S)-2-hydroxy-3-oxobutyl phosphate-binding site is contributed by Arg129.

It belongs to the DMRL synthase family.

It catalyses the reaction (2S)-2-hydroxy-3-oxobutyl phosphate + 5-amino-6-(D-ribitylamino)uracil = 6,7-dimethyl-8-(1-D-ribityl)lumazine + phosphate + 2 H2O + H(+). It functions in the pathway cofactor biosynthesis; riboflavin biosynthesis; riboflavin from 2-hydroxy-3-oxobutyl phosphate and 5-amino-6-(D-ribitylamino)uracil: step 1/2. Its function is as follows. Catalyzes the formation of 6,7-dimethyl-8-ribityllumazine by condensation of 5-amino-6-(D-ribitylamino)uracil with 3,4-dihydroxy-2-butanone 4-phosphate. This is the penultimate step in the biosynthesis of riboflavin. This chain is 6,7-dimethyl-8-ribityllumazine synthase, found in Acetivibrio thermocellus (strain ATCC 27405 / DSM 1237 / JCM 9322 / NBRC 103400 / NCIMB 10682 / NRRL B-4536 / VPI 7372) (Clostridium thermocellum).